The primary structure comprises 179 residues: Large ribosomal subunit protein uL6 (179 aa).

Belongs to the universal ribosomal protein uL6 family. In terms of assembly, part of the 50S ribosomal subunit.

In terms of biological role, this protein binds to the 23S rRNA, and is important in its secondary structure. It is located near the subunit interface in the base of the L7/L12 stalk, and near the tRNA binding site of the peptidyltransferase center. This is Large ribosomal subunit protein uL6 from Synechococcus sp. (strain WH7803).